An 85-amino-acid chain; its full sequence is uncharacterized protein (85 aa).

A signal peptide spans 1 to 21 (MRPLLCALAGLALLCAVGALA). Positions 22 to 35 (DGREDRGSPGDTGE) are enriched in basic and acidic residues. The disordered stretch occupies residues 22 to 85 (DGREDRGSPG…EVVHLPGSTL (64 aa)). Residues 36-51 (RPAGPARGPGLEPARG) show a composition bias toward low complexity.

The protein localises to the secreted. This is an uncharacterized protein from Homo sapiens (Human).